A 480-amino-acid chain; its full sequence is MTLSFTAHWHDELPGFYTALNPTPLKNARLIWHNASLANDLGVPASLFQPETGAGVWGGETLLPGMHPLAQVYSGHQFGVWAGQLGDGRGILLGEQQLENGHTVDWHLKGAGLTPYSRMGDGRAVLRSTIRESLASEAMHALGIPTSRALSIVTSDTQVARESMEQGAMLMRIAQSHVRFGHFEHFYYRREPEKVRQLADFVIEHHWPQWQNDADKYVLWFQDVVARTASLMACWQTVGFAHGVMNTDNMSILGLTIDYGPYGFLDDYQPDFICNHSDYQGRYSFENQPAVGLWNLQRLAQSLSPFIAVEALNDALDRYQDVLMQEYGKLMRRKLGLMTQEKGDNDILNALFALMSREGSDYTRTFRMLGQTEKHSAASPLRDEFIDRQGFDSWFATYRARLQREETPDDARNAHMNAVNPAMVLRNWLAQRAIDQAEQGDYAELHRLHDALRTPFNDRDDDYVSRPPDWGKRLEVSCSS.

ATP is bound by residues Gly-86, Gly-88, Arg-89, Lys-109, Asp-121, Gly-122, Arg-172, and Arg-179. Residue Asp-248 is the Proton acceptor of the active site. The Mg(2+) site is built by Asn-249 and Asp-258. ATP is bound at residue Asp-258.

It belongs to the SELO family. Mg(2+) is required as a cofactor. Requires Mn(2+) as cofactor.

The catalysed reaction is L-seryl-[protein] + ATP = 3-O-(5'-adenylyl)-L-seryl-[protein] + diphosphate. The enzyme catalyses L-threonyl-[protein] + ATP = 3-O-(5'-adenylyl)-L-threonyl-[protein] + diphosphate. It carries out the reaction L-tyrosyl-[protein] + ATP = O-(5'-adenylyl)-L-tyrosyl-[protein] + diphosphate. It catalyses the reaction L-histidyl-[protein] + UTP = N(tele)-(5'-uridylyl)-L-histidyl-[protein] + diphosphate. The catalysed reaction is L-seryl-[protein] + UTP = O-(5'-uridylyl)-L-seryl-[protein] + diphosphate. The enzyme catalyses L-tyrosyl-[protein] + UTP = O-(5'-uridylyl)-L-tyrosyl-[protein] + diphosphate. Its function is as follows. Nucleotidyltransferase involved in the post-translational modification of proteins. It can catalyze the addition of adenosine monophosphate (AMP) or uridine monophosphate (UMP) to a protein, resulting in modifications known as AMPylation and UMPylation. This chain is Protein nucleotidyltransferase YdiU, found in Enterobacter sp. (strain 638).